A 299-amino-acid chain; its full sequence is MPWLQLRINTTRELAPRVEYAMAKSGSLAVTLQDNADHPIFEPALGETPLWQETRIVGLFEADTDTTAILELVLKKSGLSEAQHQWHILEDKDWEREWMTHYQPIQCGPGFWICPSWTAPPDPQAVNLMLDPGLAFGTGTHPTTFLCLQWLAGENLANKTVIDYGCGSGILGIGALLLGAVSVTGTDIDPQALMATQENVKRNNLPAESFPVYFPDKCPENPVDIVLANILAGPLVELAPALSALLKPGGRLCLSGVLETQKDDLLAAYEPTVEIEQVFQREEWICITGTRRALKSAKE.

Residues threonine 144, glycine 165, aspartate 187, and asparagine 229 each coordinate S-adenosyl-L-methionine.

This sequence belongs to the methyltransferase superfamily. PrmA family.

It is found in the cytoplasm. It catalyses the reaction L-lysyl-[protein] + 3 S-adenosyl-L-methionine = N(6),N(6),N(6)-trimethyl-L-lysyl-[protein] + 3 S-adenosyl-L-homocysteine + 3 H(+). In terms of biological role, methylates ribosomal protein L11. The chain is Ribosomal protein L11 methyltransferase from Teredinibacter turnerae (strain ATCC 39867 / T7901).